The chain runs to 253 residues: Phosphoadenosine 5'-phosphosulfate reductase (253 aa).

Cys-239 acts as the Nucleophile; cysteine thiosulfonate intermediate in catalysis.

This sequence belongs to the PAPS reductase family. CysH subfamily.

It is found in the cytoplasm. The catalysed reaction is [thioredoxin]-disulfide + sulfite + adenosine 3',5'-bisphosphate + 2 H(+) = [thioredoxin]-dithiol + 3'-phosphoadenylyl sulfate. Its pathway is sulfur metabolism; hydrogen sulfide biosynthesis; sulfite from sulfate: step 3/3. Its function is as follows. Catalyzes the formation of sulfite from phosphoadenosine 5'-phosphosulfate (PAPS) using thioredoxin as an electron donor. This chain is Phosphoadenosine 5'-phosphosulfate reductase, found in Aliivibrio fischeri (strain ATCC 700601 / ES114) (Vibrio fischeri).